A 245-amino-acid polypeptide reads, in one-letter code: Fibroblast growth factor-binding protein 3 (245 aa).

An N-terminal signal peptide occupies residues 1–28 (MSPPRPRASLSPLTLLLLLGGCLLSAAG). The disordered stretch occupies residues 33-52 (AAGREVTRASRPTVGSSGRF). Cystine bridges form between cysteine 60/cysteine 81 and cysteine 91/cysteine 125. The interval 136-216 (CARKTAGSDL…PAAAGFQPNG (81 aa)) is disordered. Low complexity predominate over residues 170-180 (RSRQSVRSPSS). A disulfide bridge links cysteine 228 with cysteine 236.

It belongs to the fibroblast growth factor-binding protein family. In terms of assembly, interacts with FGF2. In the adult, highly expressed in brain with lower levels in ovary. In the embryo, highest levels are found in the brain and spinal cord at 14 dpc and expression is almost completely restricted to the brain by 18 dpc. In the adult and postnatal brain, highly expressed in the orbitofrontal cortex where it is concentrated primarily in differentiated neurons.

It is found in the secreted. Its function is as follows. Heparin-binding protein which binds to FGF2, prevents binding of FGF2 to heparin and probably inhibits immobilization of FGF2 on extracellular matrix glycosaminoglycans, allowing its release and subsequent activation of FGFR signaling which leads to increased vascular permeability. The polypeptide is Fibroblast growth factor-binding protein 3 (Fgfbp3) (Mus musculus (Mouse)).